Here is a 152-residue protein sequence, read N- to C-terminus: MKTFFLKEKQVDKKWLVIDAEGLVVGRLAAFVAALLRGKHKPEYTPHMDCGDNVIIVNAEKVHFTGKKLKDKIYYRHTGYSGGLKKTTPDNILNGKFPERVIKMAVKRMLDDGPMARRRFENLYVYSGSEHKHQGQQPEKIDFASLNRKNKK.

Belongs to the universal ribosomal protein uL13 family. Part of the 50S ribosomal subunit.

Functionally, this protein is one of the early assembly proteins of the 50S ribosomal subunit, although it is not seen to bind rRNA by itself. It is important during the early stages of 50S assembly. This Wolbachia pipientis subsp. Culex pipiens (strain wPip) protein is Large ribosomal subunit protein uL13.